Here is a 140-residue protein sequence, read N- to C-terminus: Small ribosomal subunit protein uS12 (140 aa).

At Asp-102 the chain carries 3-methylthioaspartic acid.

This sequence belongs to the universal ribosomal protein uS12 family. As to quaternary structure, part of the 30S ribosomal subunit. Contacts proteins S8 and S17. May interact with IF1 in the 30S initiation complex.

Its function is as follows. With S4 and S5 plays an important role in translational accuracy. Functionally, interacts with and stabilizes bases of the 16S rRNA that are involved in tRNA selection in the A site and with the mRNA backbone. Located at the interface of the 30S and 50S subunits, it traverses the body of the 30S subunit contacting proteins on the other side and probably holding the rRNA structure together. The combined cluster of proteins S8, S12 and S17 appears to hold together the shoulder and platform of the 30S subunit. The chain is Small ribosomal subunit protein uS12 from Geobacillus stearothermophilus (Bacillus stearothermophilus).